The following is a 121-amino-acid chain: Glycine cleavage system H protein (121 aa).

The Lipoyl-binding domain maps to 22-102; that stretch reads IAWVGITKYA…DSSVWLFKAE (81 aa). N6-lipoyllysine is present on K63.

This sequence belongs to the GcvH family. As to quaternary structure, the glycine cleavage system is composed of four proteins: P, T, L and H. Requires (R)-lipoate as cofactor.

Functionally, the glycine cleavage system catalyzes the degradation of glycine. The H protein shuttles the methylamine group of glycine from the P protein to the T protein. The protein is Glycine cleavage system H protein of Tropheryma whipplei (strain TW08/27) (Whipple's bacillus).